The following is a 100-amino-acid chain: NAD(P)H-quinone oxidoreductase subunit 4L, chloroplastic (100 aa).

Transmembrane regions (helical) follow at residues 1 to 21, 29 to 49, and 63 to 83; these read MIEN…YGLI, ALMC…TFSN, and ISVI…ILII.

The protein belongs to the complex I subunit 4L family. As to quaternary structure, NDH is composed of at least 16 different subunits, 5 of which are encoded in the nucleus.

It localises to the plastid. The protein localises to the chloroplast thylakoid membrane. It carries out the reaction a plastoquinone + NADH + (n+1) H(+)(in) = a plastoquinol + NAD(+) + n H(+)(out). The enzyme catalyses a plastoquinone + NADPH + (n+1) H(+)(in) = a plastoquinol + NADP(+) + n H(+)(out). NDH shuttles electrons from NAD(P)H:plastoquinone, via FMN and iron-sulfur (Fe-S) centers, to quinones in the photosynthetic chain and possibly in a chloroplast respiratory chain. The immediate electron acceptor for the enzyme in this species is believed to be plastoquinone. Couples the redox reaction to proton translocation, and thus conserves the redox energy in a proton gradient. This is NAD(P)H-quinone oxidoreductase subunit 4L, chloroplastic from Angiopteris evecta (Mule's foot fern).